Consider the following 495-residue polypeptide: Glutamyl-tRNA(Gln) amidotransferase subunit A (495 aa).

Residues lysine 75 and serine 150 each act as charge relay system in the active site. Serine 174 serves as the catalytic Acyl-ester intermediate.

It belongs to the amidase family. GatA subfamily. As to quaternary structure, heterotrimer of A, B and C subunits.

It carries out the reaction L-glutamyl-tRNA(Gln) + L-glutamine + ATP + H2O = L-glutaminyl-tRNA(Gln) + L-glutamate + ADP + phosphate + H(+). Its function is as follows. Allows the formation of correctly charged Gln-tRNA(Gln) through the transamidation of misacylated Glu-tRNA(Gln) in organisms which lack glutaminyl-tRNA synthetase. The reaction takes place in the presence of glutamine and ATP through an activated gamma-phospho-Glu-tRNA(Gln). This chain is Glutamyl-tRNA(Gln) amidotransferase subunit A, found in Paraburkholderia xenovorans (strain LB400).